Here is a 276-residue protein sequence, read N- to C-terminus: Pantothenate synthetase (276 aa).

27–34 (MGALHRGH) serves as a coordination point for ATP. The Proton donor role is filled by His-34. (R)-pantoate is bound at residue Gln-58. Gln-58 lines the beta-alanine pocket. ATP is bound at residue 147–150 (GKKD). Gln-153 is a binding site for (R)-pantoate. ATP contacts are provided by residues Val-176 and 184–187 (LSSR).

Belongs to the pantothenate synthetase family. Homodimer.

The protein localises to the cytoplasm. The catalysed reaction is (R)-pantoate + beta-alanine + ATP = (R)-pantothenate + AMP + diphosphate + H(+). It functions in the pathway cofactor biosynthesis; (R)-pantothenate biosynthesis; (R)-pantothenate from (R)-pantoate and beta-alanine: step 1/1. In terms of biological role, catalyzes the condensation of pantoate with beta-alanine in an ATP-dependent reaction via a pantoyl-adenylate intermediate. This chain is Pantothenate synthetase, found in Helicobacter pylori (strain J99 / ATCC 700824) (Campylobacter pylori J99).